Reading from the N-terminus, the 611-residue chain is Dihydroxy-acid dehydratase (611 aa).

D81 lines the Mg(2+) pocket. C122 provides a ligand contact to [2Fe-2S] cluster. The Mg(2+) site is built by D123 and K124. The residue at position 124 (K124) is an N6-carboxylysine. C195 is a [2Fe-2S] cluster binding site. Residue E491 coordinates Mg(2+). The active-site Proton acceptor is S517.

Belongs to the IlvD/Edd family. In terms of assembly, homodimer. Requires [2Fe-2S] cluster as cofactor. Mg(2+) is required as a cofactor.

It catalyses the reaction (2R)-2,3-dihydroxy-3-methylbutanoate = 3-methyl-2-oxobutanoate + H2O. It carries out the reaction (2R,3R)-2,3-dihydroxy-3-methylpentanoate = (S)-3-methyl-2-oxopentanoate + H2O. It functions in the pathway amino-acid biosynthesis; L-isoleucine biosynthesis; L-isoleucine from 2-oxobutanoate: step 3/4. It participates in amino-acid biosynthesis; L-valine biosynthesis; L-valine from pyruvate: step 3/4. In terms of biological role, functions in the biosynthesis of branched-chain amino acids. Catalyzes the dehydration of (2R,3R)-2,3-dihydroxy-3-methylpentanoate (2,3-dihydroxy-3-methylvalerate) into 2-oxo-3-methylpentanoate (2-oxo-3-methylvalerate) and of (2R)-2,3-dihydroxy-3-methylbutanoate (2,3-dihydroxyisovalerate) into 2-oxo-3-methylbutanoate (2-oxoisovalerate), the penultimate precursor to L-isoleucine and L-valine, respectively. In Histophilus somni (strain 2336) (Haemophilus somnus), this protein is Dihydroxy-acid dehydratase.